A 115-amino-acid chain; its full sequence is NADH-ubiquinone oxidoreductase chain 3 (115 aa).

The next 3 helical transmembrane spans lie at 3 to 23 (LMLTLFINTSLASVLVLIAFW), 55 to 75 (FFLVAITFLLFDLEIALLLPL), and 86 to 106 (TMLTMALILISLLAASLAYEW).

This sequence belongs to the complex I subunit 3 family. Core subunit of respiratory chain NADH dehydrogenase (Complex I) which is composed of 45 different subunits. Interacts with TMEM186. Interacts with TMEM242.

Its subcellular location is the mitochondrion inner membrane. It carries out the reaction a ubiquinone + NADH + 5 H(+)(in) = a ubiquinol + NAD(+) + 4 H(+)(out). In terms of biological role, core subunit of the mitochondrial membrane respiratory chain NADH dehydrogenase (Complex I) which catalyzes electron transfer from NADH through the respiratory chain, using ubiquinone as an electron acceptor. Essential for the catalytic activity of complex I. The chain is NADH-ubiquinone oxidoreductase chain 3 from Ceratotherium simum (White rhinoceros).